Reading from the N-terminus, the 198-residue chain is Large ribosomal subunit protein uL23c (198 aa).

Residues 1–76 constitute a chloroplast transit peptide; sequence MATTAPNLHS…SFGRDLMVAQ (76 aa).

It belongs to the universal ribosomal protein uL23 family. Component of the chloroplast large ribosomal subunit (LSU). Mature 70S chloroplast ribosomes of higher plants consist of a small (30S) and a large (50S) subunit. The 30S small subunit contains 1 molecule of ribosomal RNA (16S rRNA) and 24 different proteins. The 50S large subunit contains 3 rRNA molecules (23S, 5S and 4.5S rRNA) and 33 different proteins.

It localises to the plastid. The protein localises to the chloroplast. Its function is as follows. Component of the chloroplast ribosome (chloro-ribosome), a dedicated translation machinery responsible for the synthesis of chloroplast genome-encoded proteins, including proteins of the transcription and translation machinery and components of the photosynthetic apparatus. This is Large ribosomal subunit protein uL23c (RPL23) from Spinacia oleracea (Spinach).